The primary structure comprises 413 residues: Argininosuccinate synthase (413 aa).

ATP contacts are provided by residues 12–20 (AYSGGLDTS) and Ala39. L-citrulline-binding residues include Tyr92 and Ser97. Gly122 is an ATP binding site. Residues Thr124, Asn128, and Asp129 each coordinate L-aspartate. Asn128 is a binding site for L-citrulline. L-citrulline contacts are provided by Arg132, Ser189, Ser198, Glu274, and Tyr286.

It belongs to the argininosuccinate synthase family. Type 1 subfamily. Homotetramer.

It is found in the cytoplasm. The enzyme catalyses L-citrulline + L-aspartate + ATP = 2-(N(omega)-L-arginino)succinate + AMP + diphosphate + H(+). It participates in amino-acid biosynthesis; L-arginine biosynthesis; L-arginine from L-ornithine and carbamoyl phosphate: step 2/3. The chain is Argininosuccinate synthase from Aliarcobacter butzleri (strain RM4018) (Arcobacter butzleri).